Reading from the N-terminus, the 274-residue chain is Undecaprenyl-diphosphatase 1 (274 aa).

Helical transmembrane passes span 4–24 (LLLLKAAIMGIVEGITEFLPI), 45–65 (SAVFVVAIQMGAIAAVIYEYW), 84–104 (HLAISLILASIPIVLVGLSFG), 111–131 (LFNDVAVAIGLIVGGVIIMWI), 146–166 (IGLKQAIWIGLIQVLSLIPGT), 186–206 (ATEFSFFLGIPVIIGAGLLDL), 217–237 (FDWSVLGVGILVSFVSALLLI), and 249–269 (FMVFAWYRIVSGLLILLFAYT).

This sequence belongs to the UppP family.

The protein resides in the cell inner membrane. It catalyses the reaction di-trans,octa-cis-undecaprenyl diphosphate + H2O = di-trans,octa-cis-undecaprenyl phosphate + phosphate + H(+). In terms of biological role, catalyzes the dephosphorylation of undecaprenyl diphosphate (UPP). Confers resistance to bacitracin. This chain is Undecaprenyl-diphosphatase 1, found in Acinetobacter baylyi (strain ATCC 33305 / BD413 / ADP1).